Here is a 331-residue protein sequence, read N- to C-terminus: 2-keto-3-deoxygluconate permease (331 aa).

10 helical membrane-spanning segments follow: residues 10-30 (IPGG…TLAP), 42-62 (GMIS…GASI), 77-97 (LVLT…MFIP), 100-120 (GIQT…AMDM), 141-161 (AFVL…LGSA), 163-183 (LASF…IGFA), 200-220 (PVLI…NVIM), 224-244 (LLGI…LIIA), 254-274 (TAGV…MIIA), and 289-309 (ALVA…TALY).

Belongs to the KdgT transporter family.

The protein resides in the cell inner membrane. It catalyses the reaction 2-dehydro-3-deoxy-D-gluconate(in) + H(+)(in) = 2-dehydro-3-deoxy-D-gluconate(out) + H(+)(out). Its function is as follows. Catalyzes the proton-dependent uptake of 2-keto-3-deoxygluconate (KDG) into the cell. The chain is 2-keto-3-deoxygluconate permease from Enterobacter sp. (strain 638).